We begin with the raw amino-acid sequence, 253 residues long: ATP synthase subunit b 1 (253 aa).

Residues 2-22 traverse the membrane as a helical segment; sequence LIDWFTVIAELVNFLILVWLL.

Belongs to the ATPase B chain family. As to quaternary structure, F-type ATPases have 2 components, F(1) - the catalytic core - and F(0) - the membrane proton channel. F(1) has five subunits: alpha(3), beta(3), gamma(1), delta(1), epsilon(1). F(0) has four main subunits: a(1), b(2) and c(10-14). The alpha and beta chains form an alternating ring which encloses part of the gamma chain. F(1) is attached to F(0) by a central stalk formed by the gamma and epsilon chains, while a peripheral stalk is formed by the delta and b chains.

The protein localises to the cell inner membrane. Functionally, f(1)F(0) ATP synthase produces ATP from ADP in the presence of a proton or sodium gradient. F-type ATPases consist of two structural domains, F(1) containing the extramembraneous catalytic core and F(0) containing the membrane proton channel, linked together by a central stalk and a peripheral stalk. During catalysis, ATP synthesis in the catalytic domain of F(1) is coupled via a rotary mechanism of the central stalk subunits to proton translocation. Component of the F(0) channel, it forms part of the peripheral stalk, linking F(1) to F(0). The protein is ATP synthase subunit b 1 of Prosthecochloris aestuarii (strain DSM 271 / SK 413).